Reading from the N-terminus, the 357-residue chain is Scopoletin 8-hydroxylase (357 aa).

Residues 206 to 307 form the Fe2OG dioxygenase domain; that stretch reads MGTKMVNMNY…RVSVPIFTAP (102 aa). Tyr216 contributes to the 2-oxoglutarate binding site. Fe cation-binding residues include His231, Asp233, and His288. 2-oxoglutarate-binding residues include Arg298 and Ser300.

This sequence belongs to the iron/ascorbate-dependent oxidoreductase family. L-ascorbate serves as cofactor. The cofactor is Fe(2+). As to expression, expressed in both primary and lateral roots under iron-deficient conditions, except in apical root zones, and mostly in the root epidermal layer.

It catalyses the reaction scopoletin + 2-oxoglutarate + O2 = fraxetin + succinate + CO2. The protein operates within phenylpropanoid metabolism. Involved in the pathway of sideretin biosynthesis from feruloyl CoA, a redox-active catecholic metabolite exuded by roots in response to iron deficiency in order to facilitate the uptake of iron; this pathway consists in the successive conversion from feruloyl CoA to scopoletin, from scopoletin to fraxetin and from fraxetin to sideretin. Catalyzes the biosynthesis of fraxetin via scopoletin hydroxylation. The protein is Scopoletin 8-hydroxylase of Arabidopsis thaliana (Mouse-ear cress).